A 483-amino-acid polypeptide reads, in one-letter code: Aspartyl/glutamyl-tRNA(Asn/Gln) amidotransferase subunit B (483 aa).

The protein belongs to the GatB/GatE family. GatB subfamily. Heterotrimer of A, B and C subunits.

It carries out the reaction L-glutamyl-tRNA(Gln) + L-glutamine + ATP + H2O = L-glutaminyl-tRNA(Gln) + L-glutamate + ADP + phosphate + H(+). It catalyses the reaction L-aspartyl-tRNA(Asn) + L-glutamine + ATP + H2O = L-asparaginyl-tRNA(Asn) + L-glutamate + ADP + phosphate + 2 H(+). Its function is as follows. Allows the formation of correctly charged Asn-tRNA(Asn) or Gln-tRNA(Gln) through the transamidation of misacylated Asp-tRNA(Asn) or Glu-tRNA(Gln) in organisms which lack either or both of asparaginyl-tRNA or glutaminyl-tRNA synthetases. The reaction takes place in the presence of glutamine and ATP through an activated phospho-Asp-tRNA(Asn) or phospho-Glu-tRNA(Gln). The chain is Aspartyl/glutamyl-tRNA(Asn/Gln) amidotransferase subunit B from Anaplasma phagocytophilum (strain HZ).